The chain runs to 496 residues: Gasdermin-E (496 aa).

Residues 1–56 (MFAKATRNFLREVDADGDLIAVSNLNDSDKLQLLSLVTKKKRFWCWQRPKYQFLSL) are membrane targeting domain. An S-(2-succinyl)cysteine modification is found at C45. K120 participates in a covalent cross-link: Glycyl lysine isopeptide (Lys-Gly) (interchain with G-Cter in ubiquitin). C156, C168, and C180 each carry S-(2-succinyl)cysteine. A Glycyl lysine isopeptide (Lys-Gly) (interchain with G-Cter in ubiquitin) cross-link involves residue K189. S-(2-succinyl)cysteine is present on residues C235, C371, C408, C417, and C489.

Belongs to the gasdermin family. As to quaternary structure, homooligomer; homooligomeric ring-shaped pore complex containing 27-28 subunits when inserted in the membrane. In terms of processing, cleavage at Asp-270 by CASP3 (mature and uncleaved precursor forms) or granzyme B (GZMB) relieves autoinhibition and is sufficient to initiate pyroptosis. Succination by the Krebs cycle intermediate fumarate, which leads to S-(2-succinyl)cysteine residues, inhibits processing by caspases, and ability to initiate pyroptosis. Succination modification is catalyzed by a non-enzymatic reaction caused by an accumulation of fumarate. Post-translationally, ubiquitinated at Lys-120 and Lys-189 via 'Lys-48'-linked polyubiquitin chains, leading to proteasomal degradation. Deubiquitinated by USP48, leading to increased stability. In terms of processing, palmitoylated. In terms of tissue distribution, expressed in cochlea. Low level of expression in heart, brain, placenta, lung, liver, skeletal muscle, kidney and pancreas, with highest expression in placenta.

It is found in the cell membrane. Its subcellular location is the cytoplasm. It localises to the cytosol. Its activity is regulated as follows. The full-length protein before cleavage is inactive: intramolecular interactions between N- and C-terminal domains mediate autoinhibition in the absence of activation signal. The intrinsic pyroptosis-inducing activity is carried by the released N-terminal moiety (Gasdermin-E, N-terminal) following cleavage by CASP3 or granzyme B (GZMB). Activated by NLRP1 in the absence of GSDMD expression: NLRP1 cleaves and activates CASP8, promoting downstream activation of CASP3 and subsequent activation of GSDME. (Microbial infection) Activated upon human coronavirus SARS-CoV-2 infection, leading to lung epithelial cell death. Activation takes place in response to (1) activation of NLRP1 and (2) inactivation of GSDMD following NLRP1 and GSDMD cleavage by the SARS-CoV-2 3C-like proteinase nsp5. Its function is as follows. Precursor of a pore-forming protein that converts non-inflammatory apoptosis to pyroptosis. This form constitutes the precursor of the pore-forming protein: upon cleavage, the released N-terminal moiety (Gasdermin-E, N-terminal) binds to membranes and forms pores, triggering pyroptosis. Functionally, pore-forming protein produced by cleavage by CASP3 or granzyme B (GZMB), which converts non-inflammatory apoptosis to pyroptosis or promotes granzyme-mediated pyroptosis, respectively. After cleavage, moves to the plasma membrane, homooligomerizes within the membrane and forms pores of 10-15 nanometers (nm) of inner diameter, allowing the release of mature interleukins (IL1B and IL16) and triggering pyroptosis. Binds to inner leaflet lipids, bisphosphorylated phosphatidylinositols, such as phosphatidylinositol (4,5)-bisphosphate. Cleavage by CASP3 switches CASP3-mediated apoptosis induced by TNF or danger signals, such as chemotherapy drugs, to pyroptosis. Mediates secondary necrosis downstream of the mitochondrial apoptotic pathway and CASP3 activation as well as in response to viral agents. Exhibits bactericidal activity. Cleavage by GZMB promotes tumor suppressor activity by triggering robust anti-tumor immunity. Suppresses tumors by mediating granzyme-mediated pyroptosis in target cells of natural killer (NK) cells: cleavage by granzyme B (GZMB), delivered to target cells from NK-cells, triggers pyroptosis of tumor cells and tumor suppression. May play a role in the p53/TP53-regulated cellular response to DNA damage. (Microbial infection) Pore-forming protein, which promotes maternal placental pyroptosis in response to Zika virus infection, contributing to adverse fetal outcomes. In Homo sapiens (Human), this protein is Gasdermin-E.